Here is a 580-residue protein sequence, read N- to C-terminus: NADH-quinone oxidoreductase subunit C/D (580 aa).

The segment at 1–171 (MSLDQAIPEA…PPFVLTDRLF (171 aa)) is NADH dehydrogenase I subunit C. Residues 195–580 (ELMVLNFGPH…IDFVMSDVDR (386 aa)) form an NADH dehydrogenase I subunit D region.

It in the N-terminal section; belongs to the complex I 30 kDa subunit family. This sequence in the C-terminal section; belongs to the complex I 49 kDa subunit family. NDH-1 is composed of 13 different subunits. Subunits NuoB, CD, E, F, and G constitute the peripheral sector of the complex.

The protein resides in the cell inner membrane. The catalysed reaction is a quinone + NADH + 5 H(+)(in) = a quinol + NAD(+) + 4 H(+)(out). Its function is as follows. NDH-1 shuttles electrons from NADH, via FMN and iron-sulfur (Fe-S) centers, to quinones in the respiratory chain. The immediate electron acceptor for the enzyme in this species is believed to be ubiquinone. Couples the redox reaction to proton translocation (for every two electrons transferred, four hydrogen ions are translocated across the cytoplasmic membrane), and thus conserves the redox energy in a proton gradient. This chain is NADH-quinone oxidoreductase subunit C/D, found in Cereibacter sphaeroides (strain KD131 / KCTC 12085) (Rhodobacter sphaeroides).